We begin with the raw amino-acid sequence, 94 residues long: Co-chaperonin GroES (94 aa).

Belongs to the GroES chaperonin family. In terms of assembly, heptamer of 7 subunits arranged in a ring. Interacts with the chaperonin GroEL.

Its subcellular location is the cytoplasm. Functionally, together with the chaperonin GroEL, plays an essential role in assisting protein folding. The GroEL-GroES system forms a nano-cage that allows encapsulation of the non-native substrate proteins and provides a physical environment optimized to promote and accelerate protein folding. GroES binds to the apical surface of the GroEL ring, thereby capping the opening of the GroEL channel. The protein is Co-chaperonin GroES of Bacillus cereus (strain ZK / E33L).